The primary structure comprises 241 residues: Leucyl/phenylalanyl-tRNA--protein transferase (241 aa).

It belongs to the L/F-transferase family.

It localises to the cytoplasm. The catalysed reaction is N-terminal L-lysyl-[protein] + L-leucyl-tRNA(Leu) = N-terminal L-leucyl-L-lysyl-[protein] + tRNA(Leu) + H(+). It carries out the reaction N-terminal L-arginyl-[protein] + L-leucyl-tRNA(Leu) = N-terminal L-leucyl-L-arginyl-[protein] + tRNA(Leu) + H(+). The enzyme catalyses L-phenylalanyl-tRNA(Phe) + an N-terminal L-alpha-aminoacyl-[protein] = an N-terminal L-phenylalanyl-L-alpha-aminoacyl-[protein] + tRNA(Phe). In terms of biological role, functions in the N-end rule pathway of protein degradation where it conjugates Leu, Phe and, less efficiently, Met from aminoacyl-tRNAs to the N-termini of proteins containing an N-terminal arginine or lysine. The sequence is that of Leucyl/phenylalanyl-tRNA--protein transferase from Colwellia psychrerythraea (strain 34H / ATCC BAA-681) (Vibrio psychroerythus).